Here is a 742-residue protein sequence, read N- to C-terminus: MATKFPSFNQGLAQDPTTRRIWYGIATAHDFESHDGMTEEKLYQKLFSTHFGHLAIIALWVAGNLFHVAWQGNFEQFVLDPTHVRPIAHAIWDPHFGEGITEAMTQAGANGPVNIAYSGLYHWWYTIGMRTNEQLFQASIFMSILACWVLFAGWLHLQPKFRPTLAWFKNAEAQLNHHLSVLFGFSSIAWTGHLVHVAIPESRGQHVGWDNWLTVLPHPAGLAPFFTLNWGAYAQNPDSLDQVFGTAEGAGTAIFTFLGGLHPQSEALWLTDIAHHHIAIGCVFVIAGHMYRNTFGIGHSLKEITEAHNTRHPNDPHKGSFGISHDGIYETVNNSLHFQLGLALASLGVATSLVAQHMGALPSYAFIARDYTTQSALYTHHQYIAMFLMVGAFAHGAIFFVRDYDPEVNKDNVLARVLGTKEALISHLSWVTMLLGFHTLGIYVHNDVVVAFGNPEKQILIEPVFAQFVQAAQGKMMYGFDALLSDPTSSATIAANSMPGNHYWMDLINRQDALSSFLPIGPADFLVHHAIALGLHTTALILIKGALDARGTKLIPDKKDLGYAFPCDGPGRGGTCDSSSWDAMYLAMFWALNLIAWVTFYWHWKHLTIWQGNMAQFNESGTYLMGWFRDYLWLNSSQLINGYNPFGVNSLSPWAWMFLFGHLVWATGFMFLISWRGYWQELIETLVWAHQRTPIANLVGWRDKPVALSIVQARLVGLAHFTIGNILTFGAFVIASTSGKFG.

Transmembrane regions (helical) follow at residues 46–69 (LFST…FHVA), 135–158 (LFQA…LHLQ), 175–199 (LNHH…HVAI), 273–291 (IAHH…GHMY), 336–359 (LHFQ…QHMG), 375–401 (SALY…IFFV), 423–445 (ALIS…IYVH), and 525–543 (FLVH…LILI). [4Fe-4S] cluster contacts are provided by Cys-567 and Cys-576. 2 helical membrane passes run 583–604 (AMYL…YWHW) and 651–673 (LSPW…MFLI). Positions 662, 670, and 678 each coordinate divinyl chlorophyll a. Trp-679 lines the phylloquinone pocket. Residues 715 to 735 (LVGLAHFTIGNILTFGAFVIA) traverse the membrane as a helical segment.

Belongs to the PsaA/PsaB family. The PsaA/B heterodimer binds the P700 divinyl chlorophyll special pair and subsequent electron acceptors. PSI consists of a core antenna complex that captures photons, and an electron transfer chain that converts photonic excitation into a charge separation. The cyanobacterial PSI reaction center is composed of one copy each of PsaA,B,C,D,E,F,I,J,K,L,M and X, and forms trimeric complexes. PSI electron transfer chain: 5 divinyl chlorophyll a, 1 divinyl chlorophyll a', 2 phylloquinones and 3 4Fe-4S clusters. PSI core antenna: 90 divinyl chlorophyll a, 22 carotenoids, 3 phospholipids and 1 galactolipid. P700 is a divinyl chlorophyll a/divinyl chlorophyll a' dimer, A0 is one or more divinyl chlorophyll a, A1 is one or both phylloquinones and FX is a shared 4Fe-4S iron-sulfur center. serves as cofactor.

It is found in the cellular thylakoid membrane. The catalysed reaction is reduced [plastocyanin] + hnu + oxidized [2Fe-2S]-[ferredoxin] = oxidized [plastocyanin] + reduced [2Fe-2S]-[ferredoxin]. In terms of biological role, psaA and PsaB bind P700, the primary electron donor of photosystem I (PSI), as well as the electron acceptors A0, A1 and FX. PSI is a plastocyanin/cytochrome c6-ferredoxin oxidoreductase, converting photonic excitation into a charge separation, which transfers an electron from the donor P700 chlorophyll pair to the spectroscopically characterized acceptors A0, A1, FX, FA and FB in turn. Oxidized P700 is reduced on the lumenal side of the thylakoid membrane by plastocyanin or cytochrome c6. In Prochlorococcus marinus (strain MIT 9312), this protein is Photosystem I P700 chlorophyll a apoprotein A2.